A 92-amino-acid polypeptide reads, in one-letter code: Alpha-elapitoxin-As2a (92 aa).

A signal peptide spans 1 to 21; it reads MKTLLLTLVVVTIVCLDLGDG. Intrachain disulfides connect cysteine 24–cysteine 41, cysteine 34–cysteine 62, cysteine 47–cysteine 51, cysteine 66–cysteine 77, and cysteine 78–cysteine 83.

The protein belongs to the three-finger toxin family. Long-chain subfamily. Type II alpha-neurotoxin sub-subfamily. In terms of tissue distribution, expressed by the venom gland.

It localises to the secreted. Functionally, binds with high affinity to muscular (alpha-1/CHRNA1) and neuronal (alpha-7/CHRNA7) nicotinic acetylcholine receptor (nAChR) and inhibits acetylcholine from binding to the receptor, thereby impairing neuromuscular and neuronal transmission. This Austrelaps superbus (Lowland copperhead snake) protein is Alpha-elapitoxin-As2a.